Reading from the N-terminus, the 511-residue chain is Lysine--tRNA ligase (511 aa).

The Mg(2+) site is built by glutamate 421 and glutamate 428.

The protein belongs to the class-II aminoacyl-tRNA synthetase family. In terms of assembly, homodimer. Requires Mg(2+) as cofactor.

It localises to the cytoplasm. The enzyme catalyses tRNA(Lys) + L-lysine + ATP = L-lysyl-tRNA(Lys) + AMP + diphosphate. The sequence is that of Lysine--tRNA ligase from Aeromonas hydrophila subsp. hydrophila (strain ATCC 7966 / DSM 30187 / BCRC 13018 / CCUG 14551 / JCM 1027 / KCTC 2358 / NCIMB 9240 / NCTC 8049).